A 227-amino-acid polypeptide reads, in one-letter code: Cytochrome c oxidase subunit 2 (227 aa).

At 1 to 14 the chain is on the mitochondrial intermembrane side; the sequence is MAHPAQLGFQDAAS. Residues 15–45 traverse the membrane as a helical segment; the sequence is PIMEELMYFHDHTLMIVFLISSLVLYIISLM. Residues 46 to 59 are Mitochondrial matrix-facing; it reads LTTELTHTSTMDAQ. The chain crosses the membrane as a helical span at residues 60 to 87; sequence EVETVWTILPAVILILIALPSLRILYMM. Over 88–227 the chain is Mitochondrial intermembrane; the sequence is DEITTPSLTL…HFEEWLLSTL (140 aa). 6 residues coordinate Cu cation: histidine 161, cysteine 196, glutamate 198, cysteine 200, histidine 204, and methionine 207. Glutamate 198 contacts Mg(2+).

The protein belongs to the cytochrome c oxidase subunit 2 family. Component of the cytochrome c oxidase (complex IV, CIV), a multisubunit enzyme composed of 14 subunits. The complex is composed of a catalytic core of 3 subunits MT-CO1, MT-CO2 and MT-CO3, encoded in the mitochondrial DNA, and 11 supernumerary subunits COX4I, COX5A, COX5B, COX6A, COX6B, COX6C, COX7A, COX7B, COX7C, COX8 and NDUFA4, which are encoded in the nuclear genome. The complex exists as a monomer or a dimer and forms supercomplexes (SCs) in the inner mitochondrial membrane with NADH-ubiquinone oxidoreductase (complex I, CI) and ubiquinol-cytochrome c oxidoreductase (cytochrome b-c1 complex, complex III, CIII), resulting in different assemblies (supercomplex SCI(1)III(2)IV(1) and megacomplex MCI(2)III(2)IV(2)). Found in a complex with TMEM177, COA6, COX18, COX20, SCO1 and SCO2. Interacts with TMEM177 in a COX20-dependent manner. Interacts with COX20. Interacts with COX16. The cofactor is Cu cation.

It is found in the mitochondrion inner membrane. The enzyme catalyses 4 Fe(II)-[cytochrome c] + O2 + 8 H(+)(in) = 4 Fe(III)-[cytochrome c] + 2 H2O + 4 H(+)(out). In terms of biological role, component of the cytochrome c oxidase, the last enzyme in the mitochondrial electron transport chain which drives oxidative phosphorylation. The respiratory chain contains 3 multisubunit complexes succinate dehydrogenase (complex II, CII), ubiquinol-cytochrome c oxidoreductase (cytochrome b-c1 complex, complex III, CIII) and cytochrome c oxidase (complex IV, CIV), that cooperate to transfer electrons derived from NADH and succinate to molecular oxygen, creating an electrochemical gradient over the inner membrane that drives transmembrane transport and the ATP synthase. Cytochrome c oxidase is the component of the respiratory chain that catalyzes the reduction of oxygen to water. Electrons originating from reduced cytochrome c in the intermembrane space (IMS) are transferred via the dinuclear copper A center (CU(A)) of subunit 2 and heme A of subunit 1 to the active site in subunit 1, a binuclear center (BNC) formed by heme A3 and copper B (CU(B)). The BNC reduces molecular oxygen to 2 water molecules using 4 electrons from cytochrome c in the IMS and 4 protons from the mitochondrial matrix. This chain is Cytochrome c oxidase subunit 2 (MT-CO2), found in Microcebus tavaratra (Northern rufous mouse lemur).